The primary structure comprises 172 residues: SsrA-binding protein (172 aa).

This sequence belongs to the SmpB family.

The protein resides in the cytoplasm. In terms of biological role, required for rescue of stalled ribosomes mediated by trans-translation. Binds to transfer-messenger RNA (tmRNA), required for stable association of tmRNA with ribosomes. tmRNA and SmpB together mimic tRNA shape, replacing the anticodon stem-loop with SmpB. tmRNA is encoded by the ssrA gene; the 2 termini fold to resemble tRNA(Ala) and it encodes a 'tag peptide', a short internal open reading frame. During trans-translation Ala-aminoacylated tmRNA acts like a tRNA, entering the A-site of stalled ribosomes, displacing the stalled mRNA. The ribosome then switches to translate the ORF on the tmRNA; the nascent peptide is terminated with the 'tag peptide' encoded by the tmRNA and targeted for degradation. The ribosome is freed to recommence translation, which seems to be the essential function of trans-translation. This Dehalococcoides mccartyi (strain ATCC BAA-2266 / KCTC 15142 / 195) (Dehalococcoides ethenogenes (strain 195)) protein is SsrA-binding protein.